We begin with the raw amino-acid sequence, 101 residues long: Small ribosomal subunit protein uS10 (101 aa).

It belongs to the universal ribosomal protein uS10 family. As to quaternary structure, part of the 30S ribosomal subunit.

In terms of biological role, involved in the binding of tRNA to the ribosomes. The sequence is that of Small ribosomal subunit protein uS10 from Brachyspira hyodysenteriae (Treponema hyodysenteriae).